The chain runs to 204 residues: Large ribosomal subunit protein uL4 (204 aa).

Positions 49-75 (TKGRSDVSGGGKKPWRQKGRGGARAGS) are disordered.

The protein belongs to the universal ribosomal protein uL4 family. In terms of assembly, part of the 50S ribosomal subunit.

One of the primary rRNA binding proteins, this protein initially binds near the 5'-end of the 23S rRNA. It is important during the early stages of 50S assembly. It makes multiple contacts with different domains of the 23S rRNA in the assembled 50S subunit and ribosome. Functionally, forms part of the polypeptide exit tunnel. The protein is Large ribosomal subunit protein uL4 of Campylobacter jejuni (strain RM1221).